Here is a 95-residue protein sequence, read N- to C-terminus: Small ribosomal subunit protein uS19 (95 aa).

This sequence belongs to the universal ribosomal protein uS19 family.

Its function is as follows. Protein S19 forms a complex with S13 that binds strongly to the 16S ribosomal RNA. The protein is Small ribosomal subunit protein uS19 of Clostridium kluyveri (strain NBRC 12016).